The chain runs to 465 residues: Protein hedgehog (465 aa).

Cys-79 carries N-palmitoyl cysteine lipidation. 7 residues coordinate Ca(2+): Glu-143, Glu-144, Asp-149, Thr-179, Glu-180, Asp-183, and Asp-185. Gly-251 carries the Cholesterol glycine ester lipid modification.

This sequence belongs to the hedgehog family. In terms of assembly, interacts with shf. The C-terminal part of the hedgehog protein precursor displays an autoproteolysis activity that results in the cleavage of the full-length protein into two parts (N-product and C-product). In addition, the C-terminal part displays a cholesterol transferase activity that results by the covalent attachment of a cholesterol moiety to the C-terminal of the newly generated N-product. The N-product is the active species in both local and long-range signaling, whereas the C-product has no signaling activity. Post-translationally, cholesterylation is required for N-product targeting to lipid rafts and multimerization. In terms of processing, N-palmitoylation by Rasp of the hedgehog N-product, within the secretory pathway, is required for the embryonic and larval patterning activities of the hedgehog signal.

It localises to the nucleus. Its subcellular location is the cytoplasm. It is found in the cell membrane. It carries out the reaction glycyl-L-cysteinyl-[protein] + cholesterol + H(+) = [protein]-C-terminal glycyl cholesterol ester + N-terminal L-cysteinyl-[protein]. Its function is as follows. The C-terminal part of the hedgehog protein precursor displays an autoproteolysis activity that results in the cleavage of the full-length protein into two parts (N-product and C-product). In addition, the C-terminal part displays a cholesterol transferase activity that results by the covalent attachment of a cholesterol moiety to the C-terminal of the newly generated N-product. Once cleaved, the C-product has no signaling activity and diffuses from the cell. In terms of biological role, the dually lipidated hedgehog protein N-product is a morphogen which is essential for a variety of patterning events during development. Establishes the anterior-posterior axis of the embryonic segments and patterns the larval imaginal disks. Binds to the patched (ptc) receptor, which functions in association with smoothened (smo), to activate the transcription of target genes wingless (wg), decapentaplegic (dpp) and ptc. In the absence of hh, ptc represses the constitutive signaling activity of smo through fused (fu). Essential component of a signaling pathway which regulates the Duox-dependent gut immune response to bacterial uracil; required to activate Cad99C-dependent endosome formation, norpA-dependent Ca2+ mobilization and p38 MAPK, which are essential steps in the Duox-dependent production of reactive oxygen species (ROS) in response to intestinal bacterial infection. During photoreceptor differentiation, it up-regulates transcription of Ubr3, which in turn promotes the hh-signaling pathway by mediating the ubiquitination and degradation of cos. This is Protein hedgehog from Drosophila yakuba (Fruit fly).